The chain runs to 200 residues: GTP cyclohydrolase 1 (200 aa).

Residues C87, H90, and C158 each coordinate Zn(2+).

This sequence belongs to the GTP cyclohydrolase I family. Toroid-shaped homodecamer, composed of two pentamers of five dimers.

The enzyme catalyses GTP + H2O = 7,8-dihydroneopterin 3'-triphosphate + formate + H(+). The protein operates within cofactor biosynthesis; 7,8-dihydroneopterin triphosphate biosynthesis; 7,8-dihydroneopterin triphosphate from GTP: step 1/1. The polypeptide is GTP cyclohydrolase 1 (Xanthomonas axonopodis pv. citri (strain 306)).